Consider the following 258-residue polypeptide: GTP cyclohydrolase FolE2 (258 aa).

It belongs to the GTP cyclohydrolase IV family.

It carries out the reaction GTP + H2O = 7,8-dihydroneopterin 3'-triphosphate + formate + H(+). The protein operates within cofactor biosynthesis; 7,8-dihydroneopterin triphosphate biosynthesis; 7,8-dihydroneopterin triphosphate from GTP: step 1/1. In terms of biological role, converts GTP to 7,8-dihydroneopterin triphosphate. This chain is GTP cyclohydrolase FolE2, found in Pseudothermotoga lettingae (strain ATCC BAA-301 / DSM 14385 / NBRC 107922 / TMO) (Thermotoga lettingae).